The chain runs to 920 residues: Protein translocase subunit SecA (920 aa).

ATP contacts are provided by residues Gln-85, 103 to 107 (GEGKT), and Asp-514. Zn(2+) contacts are provided by Cys-904, Cys-906, Cys-915, and His-916.

This sequence belongs to the SecA family. Monomer and homodimer. Part of the essential Sec protein translocation apparatus which comprises SecA, SecYEG and auxiliary proteins SecDF-YajC and YidC. Requires Zn(2+) as cofactor.

It localises to the cell inner membrane. The protein resides in the cytoplasm. The catalysed reaction is ATP + H2O + cellular proteinSide 1 = ADP + phosphate + cellular proteinSide 2.. Part of the Sec protein translocase complex. Interacts with the SecYEG preprotein conducting channel. Has a central role in coupling the hydrolysis of ATP to the transfer of proteins into and across the cell membrane, serving both as a receptor for the preprotein-SecB complex and as an ATP-driven molecular motor driving the stepwise translocation of polypeptide chains across the membrane. The chain is Protein translocase subunit SecA from Janthinobacterium sp. (strain Marseille) (Minibacterium massiliensis).